The chain runs to 438 residues: V-type ATP synthase beta chain (438 aa).

It belongs to the ATPase alpha/beta chains family.

Its function is as follows. Produces ATP from ADP in the presence of a proton gradient across the membrane. The V-type beta chain is a regulatory subunit. The chain is V-type ATP synthase beta chain (atpB) from Chlamydia muridarum (strain MoPn / Nigg).